Consider the following 265-residue polypeptide: 6-oxopurine nucleoside phosphorylase (265 aa).

Phosphate is bound by residues Ser-10, 49 to 50, and 82 to 83; these read RH and SA. 2 disulfide bridges follow: Cys-136–Cys-202 and Cys-162–Cys-190. Met-187 serves as a coordination point for substrate. Position 188 (Thr-188) interacts with phosphate. Residue 211 to 213 coordinates substrate; it reads NYA. A disulfide bridge links Cys-254 with Cys-256.

Belongs to the PNP/MTAP phosphorylase family. MTAP subfamily. In terms of assembly, homohexamer. Dimer of a homotrimer.

It carries out the reaction a purine D-ribonucleoside + phosphate = a purine nucleobase + alpha-D-ribose 1-phosphate. The catalysed reaction is guanosine + phosphate = alpha-D-ribose 1-phosphate + guanine. It catalyses the reaction inosine + phosphate = alpha-D-ribose 1-phosphate + hypoxanthine. The protein operates within purine metabolism; purine nucleoside salvage. Purine nucleoside phosphorylase which is highly specific for 6-oxopurine nucleosides. Cleaves guanosine or inosine to respective bases and sugar-1-phosphate molecules. Involved in purine salvage. This Pyrococcus furiosus (strain ATCC 43587 / DSM 3638 / JCM 8422 / Vc1) protein is 6-oxopurine nucleoside phosphorylase.